We begin with the raw amino-acid sequence, 187 residues long: Elongation factor P (187 aa).

This sequence belongs to the elongation factor P family.

The protein resides in the cytoplasm. The protein operates within protein biosynthesis; polypeptide chain elongation. Involved in peptide bond synthesis. Stimulates efficient translation and peptide-bond synthesis on native or reconstituted 70S ribosomes in vitro. Probably functions indirectly by altering the affinity of the ribosome for aminoacyl-tRNA, thus increasing their reactivity as acceptors for peptidyl transferase. In Roseiflexus sp. (strain RS-1), this protein is Elongation factor P.